The primary structure comprises 1670 residues: DNA-directed RNA polymerase I subunit 1 (1670 aa).

Residues Cys79, Cys82, Cys89, His92, Cys119, and Cys122 each coordinate Zn(2+). A disordered region spans residues 154-185 (ESNTPTKSKSSDESCESVVTTDSSEECEDSDV). Over residues 176-185 (SSEECEDSDV) the composition is skewed to acidic residues. The Zn(2+) site is built by Cys213 and Cys216. Residues 255–293 (TSSVENPDGFDDSGIDALSEVEDGDKETREKSTEVAAEF) are disordered. Residues 262-279 (DGFDDSGIDALSEVEDGD) show a composition bias toward acidic residues. Residues 280 to 293 (KETREKSTEVAAEF) show a composition bias toward basic and acidic residues. Residues Asp602, Asp604, and Asp606 each coordinate Mg(2+). A bridging helix region spans residues 1005–1017 (PQEYYFHCMAGRE). The interval 1318–1437 (TGPIAGNETD…EQSKKKRRKF (120 aa)) is disordered. Acidic residues-rich tracts occupy residues 1339–1354 (DDGDDDGEGTEVDDLG), 1366–1379 (DEMDYEENSEDETN), and 1388–1399 (EDPEMDSENEDT). Residues 1415-1429 (EPQKEVKGVKNVKEQ) show a composition bias toward basic and acidic residues.

It belongs to the RNA polymerase beta' chain family. As to quaternary structure, component of the RNA polymerase I (Pol I) complex consisting of at least 13 subunits.

It localises to the nucleus. It carries out the reaction RNA(n) + a ribonucleoside 5'-triphosphate = RNA(n+1) + diphosphate. DNA-dependent RNA polymerase catalyzes the transcription of DNA into RNA using the four ribonucleoside triphosphates as substrates. Largest and catalytic core component of RNA polymerase I which synthesizes ribosomal RNA precursors. Forms the polymerase active center together with the second largest subunit. A single stranded DNA template strand of the promoter is positioned within the central active site cleft of Pol I. A bridging helix emanates from NRPA1 and crosses the cleft near the catalytic site and is thought to promote translocation of Pol I by acting as a ratchet that moves the RNA-DNA hybrid through the active site by switching from straight to bent conformations at each step of nucleotide addition. In Arabidopsis thaliana (Mouse-ear cress), this protein is DNA-directed RNA polymerase I subunit 1.